A 74-amino-acid chain; its full sequence is Large ribosomal subunit protein eL38B (74 aa).

The protein belongs to the eukaryotic ribosomal protein eL38 family. As to quaternary structure, component of the large ribosomal subunit (LSU). Mature yeast ribosomes consist of a small (40S) and a large (60S) subunit. The 40S small subunit contains 1 molecule of ribosomal RNA (18S rRNA) and at least 33 different proteins. The large 60S subunit contains 3 rRNA molecules (25S, 5.8S and 5S rRNA) and at least 46 different proteins.

The protein localises to the cytoplasm. Its function is as follows. Component of the ribosome, a large ribonucleoprotein complex responsible for the synthesis of proteins in the cell. The small ribosomal subunit (SSU) binds messenger RNAs (mRNAs) and translates the encoded message by selecting cognate aminoacyl-transfer RNA (tRNA) molecules. The large subunit (LSU) contains the ribosomal catalytic site termed the peptidyl transferase center (PTC), which catalyzes the formation of peptide bonds, thereby polymerizing the amino acids delivered by tRNAs into a polypeptide chain. The nascent polypeptides leave the ribosome through a tunnel in the LSU and interact with protein factors that function in enzymatic processing, targeting, and the membrane insertion of nascent chains at the exit of the ribosomal tunnel. The polypeptide is Large ribosomal subunit protein eL38B (rpl3802) (Schizosaccharomyces pombe (strain 972 / ATCC 24843) (Fission yeast)).